We begin with the raw amino-acid sequence, 1431 residues long: DNA polymerase II large subunit (1431 aa).

The disordered stretch occupies residues leucine 1388–lysine 1431. Residues glycine 1399–lysine 1415 are compositionally biased toward basic and acidic residues.

It belongs to the archaeal DNA polymerase II family. Heterodimer of a large subunit and a small subunit. This protein undergoes a protein self splicing that involves a post-translational excision of the intervening region (intein) followed by peptide ligation.

It catalyses the reaction DNA(n) + a 2'-deoxyribonucleoside 5'-triphosphate = DNA(n+1) + diphosphate. The enzyme catalyses Exonucleolytic cleavage in the 3'- to 5'-direction to yield nucleoside 5'-phosphates.. Possesses two activities: a DNA synthesis (polymerase) and an exonucleolytic activity that degrades single-stranded DNA in the 3'- to 5'-direction. Has a template-primer preference which is characteristic of a replicative DNA polymerase. This chain is DNA polymerase II large subunit (polC), found in Pyrococcus horikoshii (strain ATCC 700860 / DSM 12428 / JCM 9974 / NBRC 100139 / OT-3).